We begin with the raw amino-acid sequence, 833 residues long: Major vault protein (833 aa).

MVP repeat units lie at residues 54–118 (RHYC…QLIP), 119–170 (PNTG…TVIY), 171–223 (PNTA…TMLS), 224–278 (DLKA…VSLS), 280–328 (KEYV…LVVG), 329–380 (KEEA…MALD), and 381–433 (KNEG…SIQT).

In terms of assembly, the vault ribonucleoprotein particle is a huge (400 A x 670 A) cage structure of 12.9 MDa. It consists of a dimer of half-vaults, with each half-vault comprising 39 identical major vault protein (MVP) chains, PARP4 and one or more vault RNAs (vRNAs).

Its subcellular location is the cytoplasm. It localises to the nucleus. Its function is as follows. Required for normal vault structure. Vaults are multi-subunit structures that may act as scaffolds for proteins involved in signal transduction. Vaults may also play a role in nucleo-cytoplasmic transport. This Leishmania infantum protein is Major vault protein.